The following is a 94-amino-acid chain: Pyrimidine/purine nucleoside phosphorylase (94 aa).

This sequence belongs to the nucleoside phosphorylase PpnP family.

The enzyme catalyses a purine D-ribonucleoside + phosphate = a purine nucleobase + alpha-D-ribose 1-phosphate. It catalyses the reaction adenosine + phosphate = alpha-D-ribose 1-phosphate + adenine. The catalysed reaction is cytidine + phosphate = cytosine + alpha-D-ribose 1-phosphate. It carries out the reaction guanosine + phosphate = alpha-D-ribose 1-phosphate + guanine. The enzyme catalyses inosine + phosphate = alpha-D-ribose 1-phosphate + hypoxanthine. It catalyses the reaction thymidine + phosphate = 2-deoxy-alpha-D-ribose 1-phosphate + thymine. The catalysed reaction is uridine + phosphate = alpha-D-ribose 1-phosphate + uracil. It carries out the reaction xanthosine + phosphate = alpha-D-ribose 1-phosphate + xanthine. Functionally, catalyzes the phosphorolysis of diverse nucleosides, yielding D-ribose 1-phosphate and the respective free bases. Can use uridine, adenosine, guanosine, cytidine, thymidine, inosine and xanthosine as substrates. Also catalyzes the reverse reactions. The protein is Pyrimidine/purine nucleoside phosphorylase of Shigella dysenteriae serotype 1 (strain Sd197).